The chain runs to 58 residues: MDAQKDVQPPKQQPMIYICGECHTENEIKSRDPIRCRECGYRIMYKKRTKRLVVFDAR.

Residues Cys19, Cys22, Cys36, and Cys39 each coordinate Zn(2+). The C4-type zinc-finger motif lies at 19-39; it reads CGECHTENEIKSRDPIRCREC.

It belongs to the archaeal Rpo12/eukaryotic RPC10 RNA polymerase subunit family. As to quaternary structure, component of the RNA polymerase I (Pol I), RNA polymerase II (Pol II) and RNA polymerase III (Pol III) complexes consisting of at least 13, 12 and 17 subunits, respectively. Pol I complex consists of a ten-subunit catalytic core composed of POLR1A/RPA1, POLR1B/RPA2, POLR1C/RPAC1, POLR1D/RPAC2, POLR1H/RPA12, POLR2E/RPABC1, POLR2F/RPABC2, POLR2H/RPABC3, POLR2K/RPABC4 and POLR2L/RPABC5; a mobile stalk subunit POLR1F/RPA43 protruding from the core and additional subunits homologous to general transcription factors POLR1E/RPA49 and POLR1G/RPA34. Part of Pol I pre-initiation complex (PIC), in which Pol I core assembles with RRN3 and promoter-bound UTBF and SL1/TIF-IB complex. Pol II complex contains a ten-subunit catalytic core composed of POLR2A/RPB1, POLR2B/RPB2, POLR2C/RPB3, POLR2I/RPB9, POLR2J/RPB11, POLR2E/RPABC1, POLR2F/RPABC2, POLR2H/RPABC3, POLR2K/RPABC4 and POLR2L/RPABC5 and a mobile stalk composed of two subunits POLR2D/RPB4 and POLR2G/RPB7. Part of Pol II(G) complex, in which Pol II core associates with an additional subunit POLR2M; unlike conventional Pol II, Pol II(G) functions as a transcriptional repressor. Part of TBP-based Pol II pre-initiation complex (PIC), in which Pol II core assembles with general transcription factors and other specific initiation factors including GTF2E1, GTF2E2, GTF2F1, GTF2F2, TCEA1, ERCC2, ERCC3, GTF2H2, GTF2H3, GTF2H4, GTF2H5, GTF2A1, GTF2A2, GTF2B and TBP; this large multi-subunit PIC complex mediates DNA unwinding and targets Pol II core to the transcription start site where the first phosphodiester bond forms. Pol III complex consists of a ten-subunit catalytic core composed of POLR3A/RPC1, POLR3B/RPC2, POLR1C/RPAC1, POLR1D/RPAC2, POLR3K/RPC10, POLR2E/RPABC1, POLR2F/RPABC2, POLR2H/RPABC3, POLR2K/RPABC4 and POLR2L/RPABC5; a mobile stalk composed of two subunits POLR3H/RPC8 and CRCP/RPC9, protruding from the core and functioning primarily in transcription initiation; and additional subunits homologous to general transcription factors of the RNA polymerase II machinery, POLR3C/RPC3-POLR3F/RPC6-POLR3G/RPC7 heterotrimer required for transcription initiation and POLR3D/RPC4-POLR3E/RPC5 heterodimer involved in both transcription initiation and termination.

The protein resides in the nucleus. It localises to the nucleolus. In terms of biological role, DNA-dependent RNA polymerase catalyzes the transcription of DNA into RNA using the four ribonucleoside triphosphates as substrates. Common component of RNA polymerases I, II and III which synthesize ribosomal RNA precursors, mRNA precursors and many functional non-coding RNAs, and a small RNAs, such as 5S rRNA and tRNAs, respectively. This is DNA-directed RNA polymerases I, II, and III subunit RPABC4 (Polr2k) from Mus musculus (Mouse).